A 189-amino-acid chain; its full sequence is Interferon alpha-D (189 aa).

Residues 1 to 23 form the signal peptide; the sequence is MAPAWSLLLALLLLSCNAICSLG. 2 cysteine pairs are disulfide-bonded: cysteine 24–cysteine 122 and cysteine 52–cysteine 162.

This sequence belongs to the alpha/beta interferon family.

Its subcellular location is the secreted. Functionally, produced by macrophages, IFN-alpha have antiviral activities. Interferon stimulates the production of two enzymes: a protein kinase and an oligoadenylate synthetase. This chain is Interferon alpha-D (IFNAD), found in Bos taurus (Bovine).